The chain runs to 762 residues: Pyrophosphate-energized vacuolar membrane proton pump (762 aa).

Residues 1 to 6 lie on the Intravacuolar side of the membrane; the sequence is MAILGE. The chain crosses the membrane as a helical span at residues 7-33; it reads LGTEILIPVCGVIGIVFAVAQWFIVSK. The Cytoplasmic portion of the chain corresponds to 34-81; that stretch reads VKVTPGAASAAAGAKNGYGDYLIEEEEGLNDHNVVVKCAEIQTAISEG. The helical transmembrane segment at 82–111 threads the bilayer; it reads ATSFLFTMYQYVGMFMVVFAAIIFLFLGSI. Over 112-131 the chain is Intravacuolar; sequence EGFSTKGQPCTYSKGTCKPA. Cysteine 121 and cysteine 128 are disulfide-bonded. Residues 132–159 form a helical membrane-spanning segment; it reads LYTALFSTASFLLGAITSLVSGFLGMKI. The Cytoplasmic portion of the chain corresponds to 160–182; that stretch reads ATYANARTTLEARKGVGKAFITA. Residues 183–212 form a helical membrane-spanning segment; sequence FRSGAVMGFLLSSSGLVVLYITINVFKMYY. Residues 213–215 are Intravacuolar-facing; sequence GDD. The chain crosses the membrane as a helical span at residues 216 to 244; it reads WEGLFESITGYGLGGSSMALFGRVGGGIY. Residues 245–282 are Cytoplasmic-facing; sequence TKAADVGADLVGKVERNIPEDDPRNPAVIADNVGDNVG. Lysine 246 provides a ligand contact to substrate. Residues aspartate 249, aspartate 253, and aspartate 279 each contribute to the Mg(2+) site. The chain crosses the membrane as a helical span at residues 283 to 308; the sequence is DIAGMGSDLFGSYAESSCAALVVASI. Residues 309–316 lie on the Intravacuolar side of the membrane; it reads SSFGINHD. Residues 317 to 342 traverse the membrane as a helical segment; the sequence is FTAMCYPLLVSSVGIIVCLLTTLFAT. At 343–350 the chain is on the cytoplasmic side; it reads DFFEIKAA. The helical transmembrane segment at 351-378 threads the bilayer; sequence NEIEPALKKQLIISTALMTVGVAVISWL. The Intravacuolar portion of the chain corresponds to 379 to 397; the sequence is ALPAKFTIFNFGAQKEVSN. The chain crosses the membrane as a helical span at residues 398 to 421; sequence WGLFFCVAVGLWAGLIIGFVTEYY. Over 422 to 443 the chain is Cytoplasmic; the sequence is TSNAYSPVQDVADSCRTGAATN. Residues 444 to 468 form a helical membrane-spanning segment; sequence VIFGLALGYKSVIIPIFAIAVSIYV. Residues 469–474 are Intravacuolar-facing; that stretch reads SFSIAA. Residues 475-501 form a helical membrane-spanning segment; sequence MYGIAMAALGMLSTMATGLAIDAYGPI. The Cytoplasmic segment spans residues 502 to 530; that stretch reads SDNAGGIAEMAGMSHRIRERTDALDAAGN. Mg(2+)-binding residues include aspartate 503 and asparagine 530. Residues 531 to 559 form a helical membrane-spanning segment; it reads TTAAIGKGFAIGSAALVSLALFGAFVSRA. The Intravacuolar portion of the chain corresponds to 560 to 569; sequence GVKVVDVLSP. The chain crosses the membrane as a helical span at residues 570 to 598; the sequence is KVFIGLIVGAMLPYWFSAMTMKSVGSAAL. The Cytoplasmic segment spans residues 599-627; the sequence is KMVEEVRRQFNTIPGLMEGTAKPDYATCV. Residues 628 to 656 traverse the membrane as a helical segment; that stretch reads KISTDASIKEMIPPGALVMLTPLIVGTLF. Glycine 657 is a topological domain (intravacuolar). Residues 658 to 685 form a helical membrane-spanning segment; that stretch reads VETLSGVLAGALVSGVQIAISASNTGGA. Residues 686–728 lie on the Cytoplasmic side of the membrane; sequence WDNAKKYIEAGNSEHARSLGPKGSDCHKAAVIGDTIGDPLKDT. Residues aspartate 687 and aspartate 723 each coordinate Mg(2+). A substrate-binding site is contributed by lysine 726. The helical transmembrane segment at 729–754 threads the bilayer; that stretch reads SGPSLNILIKLMAVESLVFAPFFATY. Topologically, residues 755 to 762 are intravacuolar; the sequence is GGLLFKYI.

It belongs to the H(+)-translocating pyrophosphatase (TC 3.A.10) family. K(+)-stimulated subfamily. As to quaternary structure, monomer.

Its subcellular location is the vacuole membrane. The enzyme catalyses diphosphate + H2O + H(+)(in) = 2 phosphate + 2 H(+)(out). In terms of biological role, contributes to the transtonoplast (from cytosol to vacuole lumen) H(+)-electrochemical potential difference. It establishes a proton gradient of similar and often greater magnitude than the H(+)-ATPase on the same membrane. The polypeptide is Pyrophosphate-energized vacuolar membrane proton pump (Hordeum vulgare (Barley)).